Reading from the N-terminus, the 1069-residue chain is Enteropeptidase (1069 aa).

Residues 1-18 (MKSSRDEAVGHHSISSFE) are Cytoplasmic-facing. Residues 19-47 (VMLSALFIMLMVFSIGLIAVSWLAVKESE) traverse the membrane as a helical; Signal-anchor for type II membrane protein segment. Over 48 to 1069 (GDAALGKSHE…FIEWIHSFLH (1022 aa)) the chain is Extracellular. The SEA domain maps to 54–169 (KSHEVRGTFK…NSIDITASLS (116 aa)). N-linked (GlcNAc...) asparagine glycans are attached at residues N147, N197, and N212. The region spanning 227 to 268 (IECQPGSRPCAHAWNCVATDLFCDGEVNCPDGSDEDTGLCAT) is the LDL-receptor class A 1 domain. 4 cysteine pairs are disulfide-bonded: C229–C242, C236–C255, C249–C266, and C270–C298. In terms of domain architecture, CUB 1 spans 270-379 (CDGRFLLTGD…IGFNATYSTF (110 aa)). Residues N373, N380, N433, N515, N579, and N675 are each glycosylated (N-linked (GlcNAc...) asparagine). In terms of domain architecture, MAM spans 387–549 (YEKIDCTFDD…ISLTNGICSQ (163 aa)). C569 and C597 are disulfide-bonded. In terms of domain architecture, CUB 2 spans 569–679 (CGGPFELWEP…KGFKANFTSG (111 aa)). The LDL-receptor class A 2 domain maps to 686 to 724 (EPCQDDEFQCKDGNCIPLGNLCDSYPHCRDGSDEASCVR). Disulfide bonds link C688–C700, C695–C713, and C707–C722. The region spanning 723–816 (VRFLNGTRSN…LILLQCNHKS (94 aa)) is the SRCR domain. N727, N751, N770, and N791 each carry an N-linked (GlcNAc...) asparagine glycan. Intrachain disulfides connect C802–C812, C817–C945, C859–C875, C959–C1027, C991–C1006, and C1017–C1045. The region spanning 830-1069 (IVGGSDAQAG…FIEWIHSFLH (240 aa)) is the Peptidase S1 domain. H874 functions as the Charge relay system in the catalytic mechanism. N-linked (GlcNAc...) asparagine glycosylation is present at N897. The active-site Charge relay system is the D925. N-linked (GlcNAc...) asparagine glycosylation is found at N936 and N999. The Charge relay system role is filled by S1021.

It belongs to the peptidase S1 family. Heterodimer of a catalytic (light) chain and a multidomain (heavy) chain linked by a disulfide bond. The chains are derived from a single precursor that is cleaved by a trypsin-like protease.

The protein resides in the membrane. It carries out the reaction Activation of trypsinogen by selective cleavage of 6-Lys-|-Ile-7 bond.. Responsible for initiating activation of pancreatic proteolytic proenzymes (trypsin, chymotrypsin and carboxypeptidase A). It catalyzes the conversion of trypsinogen to trypsin which in turn activates other proenzymes including chymotrypsinogen, procarboxypeptidases, and proelastases. This chain is Enteropeptidase (Tmprss15), found in Mus musculus (Mouse).